Here is a 1014-residue protein sequence, read N- to C-terminus: SUMO-specific isopeptidase USPL1 (1014 aa).

Disordered regions lie at residues T137 to P158 and E275 to E318. A compositionally biased stretch (basic and acidic residues) spans E275 to L289. Positions L355–D636 constitute a USP domain. C364 functions as the Nucleophile in the catalytic mechanism. Positions C364 to L631 are SUMO-binding. H592 functions as the Proton acceptor in the catalytic mechanism. 2 disordered regions span residues H794–H823 and N844–E867. The span at I802–K815 shows a compositional bias: pro residues.

This sequence belongs to the peptidase C19 family.

It is found in the nucleus. Its subcellular location is the cajal body. Functionally, SUMO-specific isopeptidase involved in protein desumoylation. Specifically binds SUMO proteins with a higher affinity for sumo2 and sumo3 which it cleaves more efficiently. Also able to process full-length SUMO proteins to their mature forms. Plays a key role in RNA polymerase-II-mediated snRNA transcription in the Cajal bodies. Is a component of complexes that can bind to U snRNA genes. The sequence is that of SUMO-specific isopeptidase USPL1 (uspl1) from Danio rerio (Zebrafish).